A 159-amino-acid polypeptide reads, in one-letter code: Ribosome maturation factor RimP (159 aa).

Belongs to the RimP family.

The protein resides in the cytoplasm. Functionally, required for maturation of 30S ribosomal subunits. This is Ribosome maturation factor RimP from Streptococcus pneumoniae (strain 70585).